A 328-amino-acid polypeptide reads, in one-letter code: Malate dehydrogenase (328 aa).

NAD(+) is bound at residue Gly-12–Gly-18. Positions 95 and 101 each coordinate substrate. NAD(+)-binding positions include Asn-108, Gln-115, and Val-132–Asn-134. Residues Asn-134 and Arg-165 each coordinate substrate. The active-site Proton acceptor is the His-190.

It belongs to the LDH/MDH superfamily. MDH type 2 family.

It carries out the reaction (S)-malate + NAD(+) = oxaloacetate + NADH + H(+). In terms of biological role, catalyzes the reversible oxidation of malate to oxaloacetate. This is Malate dehydrogenase from Polaromonas naphthalenivorans (strain CJ2).